The following is a 299-amino-acid chain: Bifunctional phosphoglucose/phosphomannose isomerase (299 aa).

One can recognise an SIS domain in the interval aspartate 27–lysine 177. The D-fructose 6-phosphate site is built by glycine 44, serine 45, serine 84, serine 86, threonine 89, and arginine 132. Catalysis depends on glutamate 200, which acts as the Proton acceptor. Histidine 216 and lysine 295 together coordinate D-fructose 6-phosphate. The active-site Proton donor is the histidine 216. Catalysis depends on lysine 295, which acts as the Proton acceptor.

The protein belongs to the PGI/PMI family. Homodimer.

It catalyses the reaction alpha-D-glucose 6-phosphate = beta-D-fructose 6-phosphate. The catalysed reaction is D-mannose 6-phosphate = D-fructose 6-phosphate. Presence or absence of metal ions or EDTA does not significantly affect the phosphoglucose isomerase activity. In terms of biological role, dual specificity isomerase that catalyzes the isomerization of both glucose-6-phosphate and mannose-6-phosphate to fructose-6-phosphate with nearly similar catalytic efficiency. Also catalyzes the epimerization of mannose 6-phosphate to glucose 6-phosphate but the rate of epimerization reaction is 20-fold lower than that of isomerization reaction. This is Bifunctional phosphoglucose/phosphomannose isomerase from Pyrobaculum calidifontis (strain DSM 21063 / JCM 11548 / VA1).